Here is a 366-residue protein sequence, read N- to C-terminus: Peptide chain release factor 2 (366 aa).

At Gln-251 the chain carries N5-methylglutamine.

It belongs to the prokaryotic/mitochondrial release factor family. In terms of processing, methylated by PrmC. Methylation increases the termination efficiency of RF2.

It is found in the cytoplasm. Functionally, peptide chain release factor 2 directs the termination of translation in response to the peptide chain termination codons UGA and UAA. The chain is Peptide chain release factor 2 from Exiguobacterium sp. (strain ATCC BAA-1283 / AT1b).